The chain runs to 261 residues: Small ribosomal subunit protein eS1 (261 aa).

A compositionally biased stretch (basic residues) spans 1–18 (MAVGKNKRISKGKKGGKK). Residues 1-22 (MAVGKNKRISKGKKGGKKKAAD) are disordered.

The protein belongs to the eukaryotic ribosomal protein eS1 family. As to quaternary structure, component of the small ribosomal subunit. Mature ribosomes consist of a small (40S) and a large (60S) subunit. The 40S subunit contains about 33 different proteins and 1 molecule of RNA (18S). The 60S subunit contains about 49 different proteins and 3 molecules of RNA (25S, 5.8S and 5S).

The protein localises to the cytoplasm. The sequence is that of Small ribosomal subunit protein eS1 from Cicer arietinum (Chickpea).